Here is a 317-residue protein sequence, read N- to C-terminus: Melanocyte-stimulating hormone receptor (317 aa).

The Extracellular segment spans residues Met-1–Glu-37. A glycan (N-linked (GlcNAc...) asparagine) is linked at Asn-29. Residues Val-38–Ile-63 form a helical membrane-spanning segment. The Cytoplasmic portion of the chain corresponds to Ala-64 to Pro-72. The chain crosses the membrane as a helical span at residues Met-73–Leu-93. Topologically, residues Glu-94 to Asn-118 are extracellular. A helical transmembrane segment spans residues Val-119 to Val-140. Over Asp-141–Arg-163 the chain is Cytoplasmic. Residues Ile-164 to Tyr-183 traverse the membrane as a helical segment. The Extracellular segment spans residues Asn-184–Cys-191. Residues Leu-192 to Leu-211 form a helical membrane-spanning segment. Over Ala-212 to Ala-240 the chain is Cytoplasmic. A helical transmembrane segment spans residues Ala-241–Leu-266. Over Cys-267 to Asn-279 the chain is Extracellular. The chain crosses the membrane as a helical span at residues Phe-280–Phe-300. Topologically, residues Arg-301–Trp-317 are cytoplasmic. The S-palmitoyl cysteine moiety is linked to residue Cys-315.

It belongs to the G-protein coupled receptor 1 family. In terms of assembly, interacts with MGRN1, but does not undergo MGRN1-mediated ubiquitination; this interaction competes with GNAS-binding and thus inhibits agonist-induced cAMP production. Interacts with OPN3; the interaction results in a decrease in MC1R-mediated cAMP signaling and ultimately a decrease in melanin production in melanocytes.

It is found in the cell membrane. In terms of biological role, receptor for MSH (alpha, beta and gamma) and ACTH. The activity of this receptor is mediated by G proteins which activate adenylate cyclase. Mediates melanogenesis, the production of eumelanin (black/brown) and phaeomelanin (red/yellow), via regulation of cAMP signaling in melanocytes. The chain is Melanocyte-stimulating hormone receptor (MC1R) from Rangifer tarandus (Reindeer).